A 460-amino-acid chain; its full sequence is tRNA-2-methylthio-N(6)-dimethylallyladenosine synthase (460 aa).

In terms of domain architecture, MTTase N-terminal spans 10 to 126 (GSYWITTFGC…LEVLLNRVDS (117 aa)). Positions 19, 55, 89, 161, 165, and 168 each coordinate [4Fe-4S] cluster. A Radical SAM core domain is found at 147-384 (RDSSICGWVN…NALVERCARE (238 aa)). The 69-residue stretch at 387 to 455 (ARYAGRTEEV…SFSLSGTPLP (69 aa)) folds into the TRAM domain.

The protein belongs to the methylthiotransferase family. MiaB subfamily. Monomer. [4Fe-4S] cluster is required as a cofactor.

Its subcellular location is the cytoplasm. The catalysed reaction is N(6)-dimethylallyladenosine(37) in tRNA + (sulfur carrier)-SH + AH2 + 2 S-adenosyl-L-methionine = 2-methylsulfanyl-N(6)-dimethylallyladenosine(37) in tRNA + (sulfur carrier)-H + 5'-deoxyadenosine + L-methionine + A + S-adenosyl-L-homocysteine + 2 H(+). Its function is as follows. Catalyzes the methylthiolation of N6-(dimethylallyl)adenosine (i(6)A), leading to the formation of 2-methylthio-N6-(dimethylallyl)adenosine (ms(2)i(6)A) at position 37 in tRNAs that read codons beginning with uridine. In Parasynechococcus marenigrum (strain WH8102), this protein is tRNA-2-methylthio-N(6)-dimethylallyladenosine synthase.